The following is a 483-amino-acid chain: MEEEDPTASNVITNSNSSSMRNLSPAMNTPVVSLESRINRLINANQSQSPSPSSLSRSIYSDRFIPSRSGSNFALFDLSPSPSKDGKEDGAGSYATLLRAAMFGPETPEKRDITGFSSSRNIFRFKTETHRSLNSFSPFGVDDDSPGVSHSGPVKAPRKVPRSPYKVLDAPALQDDFYLNLVDWSAQNVLAVGLGNCVYLWNACSSKVTKLCDLGAEDSVCSVGWALRGTHLAVGTSTGKVQIWDASRCKRTRTMEGHRLRVGALAWGSSVLSSGSRDKSILQRDIRCQEDHVSKLAGHKSEVCGLKWSYDNRELASGGNDNRLFVWNQHSTQPVLKYSEHTAAVKAIAWSPHVHGLLASGGGTADRCIRFWNTTTNTHLSSIDTCSQVCNLAWSKNVNELVSTHGYSQNQIIVWKYPTMSKIATLTGHTYRVLYLAVSPDGQTIVTGAGDETLRFWNVFPSPKSQNTDSEIGSSFFGRTTIR.

The segment at 1-28 (MEEEDPTASNVITNSNSSSMRNLSPAMN) is disordered. The span at 7–28 (TASNVITNSNSSSMRNLSPAMN) shows a compositional bias: polar residues. 7 WD repeats span residues 174–211 (QDDF…VTKL), 215–254 (GAED…RTRT), 257–294 (GHRL…DHVS), 298–337 (GHKS…PVLK), 340–382 (EHTA…HLSS), 384–425 (DTCS…KIAT), and 428–467 (GHTY…KSQN).

It belongs to the WD repeat CDC20/Fizzy family. As to quaternary structure, associates with the APC/C complex. Interacts with CDC20-1, CDC20-2, CYCA1-1, CYCA1-2, CYCA3-4, CYCB1-1 and CYCB1-2. Binds to GIG1 and PYM. In terms of tissue distribution, expressed in seedlings, flowers, leaves and roots. Expressed in the differentiating cell files of the root elongation zone.

Its subcellular location is the nucleus. Its pathway is protein modification; protein ubiquitination. Its function is as follows. Activator protein that regulates the ubiquitin ligase activity and substrate specificity of the anaphase promoting complex/cyclosome (APC/C). Necessary and sufficient for endoreduplication and correct cell expansion. Controls meristem size by stimulating endoreduplication in the elongation zone. The sequence is that of Protein FIZZY-RELATED 2 (FZR2) from Arabidopsis thaliana (Mouse-ear cress).